The primary structure comprises 551 residues: Chaperonin GroEL (551 aa).

Residues 30-33 (TLGP), Lys51, 87-91 (DGTTT), Gly415, 479-481 (NAA), and Asp495 contribute to the ATP site. The interval 523–551 (DSPKEDKSSDMPSPSAGGMGGMGGMGGMM) is disordered. Positions 539-551 (GGMGGMGGMGGMM) are enriched in gly residues.

This sequence belongs to the chaperonin (HSP60) family. In terms of assembly, forms a cylinder of 14 subunits composed of two heptameric rings stacked back-to-back. Interacts with the co-chaperonin GroES.

The protein localises to the cytoplasm. The catalysed reaction is ATP + H2O + a folded polypeptide = ADP + phosphate + an unfolded polypeptide.. Together with its co-chaperonin GroES, plays an essential role in assisting protein folding. The GroEL-GroES system forms a nano-cage that allows encapsulation of the non-native substrate proteins and provides a physical environment optimized to promote and accelerate protein folding. The chain is Chaperonin GroEL from Buchnera aphidicola subsp. Chaetophorus leucomelas.